The primary structure comprises 312 residues: Porphobilinogen deaminase (312 aa).

At Cys-241 the chain carries S-(dipyrrolylmethanemethyl)cysteine.

It belongs to the HMBS family. In terms of assembly, monomer. It depends on dipyrromethane as a cofactor.

It carries out the reaction 4 porphobilinogen + H2O = hydroxymethylbilane + 4 NH4(+). The protein operates within porphyrin-containing compound metabolism; protoporphyrin-IX biosynthesis; coproporphyrinogen-III from 5-aminolevulinate: step 2/4. Its pathway is porphyrin-containing compound metabolism; chlorophyll biosynthesis. Functionally, tetrapolymerization of the monopyrrole PBG into the hydroxymethylbilane pre-uroporphyrinogen in several discrete steps. The polypeptide is Porphobilinogen deaminase (Prosthecochloris aestuarii (strain DSM 271 / SK 413)).